Reading from the N-terminus, the 102-residue chain is Small ribosomal subunit protein uS10 (102 aa).

This sequence belongs to the universal ribosomal protein uS10 family. As to quaternary structure, part of the 30S ribosomal subunit.

Involved in the binding of tRNA to the ribosomes. The protein is Small ribosomal subunit protein uS10 of Thermococcus gammatolerans (strain DSM 15229 / JCM 11827 / EJ3).